Here is a 108-residue protein sequence, read N- to C-terminus: Nucleoid-associated protein BQ02190 (108 aa).

This sequence belongs to the YbaB/EbfC family. Homodimer.

It localises to the cytoplasm. Its subcellular location is the nucleoid. In terms of biological role, binds to DNA and alters its conformation. May be involved in regulation of gene expression, nucleoid organization and DNA protection. The protein is Nucleoid-associated protein BQ02190 of Bartonella quintana (strain Toulouse) (Rochalimaea quintana).